A 441-amino-acid polypeptide reads, in one-letter code: FBD-associated F-box protein At5g18780 (441 aa).

The F-box domain occupies 10 to 56 (EDRISILPEPLLCHILSFLRTKDSVRTSVLSSRWRDLWLWVPRLDLD). Residues 366–410 (LPRCLISSLASVDIESPITDKATELKLVSYLLENSTTLKKLVLRL) form the FBD domain.

The sequence is that of FBD-associated F-box protein At5g18780 from Arabidopsis thaliana (Mouse-ear cress).